Here is an 87-residue protein sequence, read N- to C-terminus: UPF0147 protein AF_2370.1 (87 aa).

Belongs to the UPF0147 family.

The protein is UPF0147 protein AF_2370.1 of Archaeoglobus fulgidus (strain ATCC 49558 / DSM 4304 / JCM 9628 / NBRC 100126 / VC-16).